The sequence spans 164 residues: Phosphopantetheine adenylyltransferase (164 aa).

Ser-9 serves as a coordination point for substrate. Residues 9–10 and His-17 contribute to the ATP site; that span reads SF. Substrate is bound by residues Lys-41, Val-78, and Arg-92. Residues 93-95, Glu-103, and 128-134 contribute to the ATP site; these read GLR and VRTITAT.

The protein belongs to the bacterial CoaD family. In terms of assembly, homohexamer. Mg(2+) serves as cofactor.

Its subcellular location is the cytoplasm. It carries out the reaction (R)-4'-phosphopantetheine + ATP + H(+) = 3'-dephospho-CoA + diphosphate. It functions in the pathway cofactor biosynthesis; coenzyme A biosynthesis; CoA from (R)-pantothenate: step 4/5. In terms of biological role, reversibly transfers an adenylyl group from ATP to 4'-phosphopantetheine, yielding dephospho-CoA (dPCoA) and pyrophosphate. The sequence is that of Phosphopantetheine adenylyltransferase from Brucella suis (strain ATCC 23445 / NCTC 10510).